The primary structure comprises 119 residues: Aspartate 1-decarboxylase (119 aa).

The active-site Schiff-base intermediate with substrate; via pyruvic acid is S25. The residue at position 25 (S25) is a Pyruvic acid (Ser). Substrate is bound at residue T57. Catalysis depends on Y58, which acts as the Proton donor. 73 to 75 (GAA) contacts substrate.

The protein belongs to the PanD family. As to quaternary structure, heterooctamer of four alpha and four beta subunits. Pyruvate is required as a cofactor. In terms of processing, is synthesized initially as an inactive proenzyme, which is activated by self-cleavage at a specific serine bond to produce a beta-subunit with a hydroxyl group at its C-terminus and an alpha-subunit with a pyruvoyl group at its N-terminus.

It is found in the cytoplasm. The catalysed reaction is L-aspartate + H(+) = beta-alanine + CO2. Its pathway is cofactor biosynthesis; (R)-pantothenate biosynthesis; beta-alanine from L-aspartate: step 1/1. Functionally, catalyzes the pyruvoyl-dependent decarboxylation of aspartate to produce beta-alanine. This is Aspartate 1-decarboxylase from Thermosipho melanesiensis (strain DSM 12029 / CIP 104789 / BI429).